A 135-amino-acid polypeptide reads, in one-letter code: Small ribosomal subunit protein uS12 (135 aa).

The tract at residues 1–29 (MPTINQLVRKGREKVEKKSKAPALQGNPQ) is disordered. The residue at position 89 (aspartate 89) is a 3-methylthioaspartic acid. A disordered region spans residues 106-135 (GVKDRKQSRSKYGAKRPKPGQAAATTGKKK). The segment covering 113-123 (SRSKYGAKRPK) has biased composition (basic residues).

Belongs to the universal ribosomal protein uS12 family. In terms of assembly, part of the 30S ribosomal subunit. Contacts proteins S8 and S17. May interact with IF1 in the 30S initiation complex.

In terms of biological role, with S4 and S5 plays an important role in translational accuracy. Its function is as follows. Interacts with and stabilizes bases of the 16S rRNA that are involved in tRNA selection in the A site and with the mRNA backbone. Located at the interface of the 30S and 50S subunits, it traverses the body of the 30S subunit contacting proteins on the other side and probably holding the rRNA structure together. The combined cluster of proteins S8, S12 and S17 appears to hold together the shoulder and platform of the 30S subunit. The chain is Small ribosomal subunit protein uS12 from Sulfurihydrogenibium sp. (strain YO3AOP1).